The sequence spans 1148 residues: Putative transcription factor SEF1 (1148 aa).

Residues 1 to 51 form a disordered region; sequence MVKDNRDSDQDQDFSSAHMKRQPEQQQLQQHQFPSKKQRISHHDDSHQINH. A Phosphoserine modification is found at Ser-8. The segment at residues 57 to 87 is a DNA-binding region (zn(2)-C6 fungal-type); sequence CTHCRQHKIKCDASQNFPHPCSRCEKIGLHC. The segment at 148-180 is disordered; that stretch reads PTPGTIIPNPDSSPSSGSPTSSAAQRDSKVSVQ. Residues 150–169 are compositionally biased toward low complexity; the sequence is PGTIIPNPDSSPSSGSPTSS. Position 263 is a phosphoserine (Ser-263). The segment at 524 to 550 is disordered; it reads EESEEDNNDSIDNNNNDKRNKKDEPHV. Basic and acidic residues predominate over residues 538–550; that stretch reads NNDKRNKKDEPHV. Residue Ser-806 is modified to Phosphoserine. Residues 1029–1050 are compositionally biased toward polar residues; the sequence is RSQSSMSHSRTPIASKSNNMTD. A disordered region spans residues 1029–1063; the sequence is RSQSSMSHSRTPIASKSNNMTDLHSVVSDPGSSKS.

The protein localises to the nucleus. Functionally, putative transcription factor that seems to be involved in the sporulation process. Suppresses the lethal phenotype of RPM2 deletion. This chain is Putative transcription factor SEF1 (SEF1), found in Saccharomyces cerevisiae (strain ATCC 204508 / S288c) (Baker's yeast).